A 237-amino-acid chain; its full sequence is Histone H1E (237 aa).

Low complexity predominate over residues 1–21; it reads MSDPAQEVEAPVEAAPVASSP. Disordered regions lie at residues 1-56 and 109-237; these read MSDP…PVSE and LQAK…KKAK. Residues 26–42 show a composition bias toward basic and acidic residues; that stretch reads EKAPKAPKAEKPKSDKP. Positions 50-124 constitute an H15 domain; that stretch reads THPPVSEMVV…GASGSFKLPP (75 aa). Over residues 182–195 the composition is skewed to low complexity; the sequence is AKPAAKKAAAPKPK. Residues 200–209 are compositionally biased toward basic and acidic residues; that stretch reads PKKEVKPKKE. Residues 210–237 show a composition bias toward basic residues; it reads AKPKKAAAKPAKKPAAKPAKKPAAKKAK.

It belongs to the histone H1/H5 family.

It localises to the nucleus. The protein localises to the chromosome. In terms of biological role, histones H1 are necessary for the condensation of nucleosome chains into higher-order structures. In Chironomus tentans (Midge), this protein is Histone H1E.